We begin with the raw amino-acid sequence, 118 residues long: Small ribosomal subunit protein uS13 (118 aa).

The segment at 94–118 is disordered; the sequence is SLPLRGQRTKTNARTRKGPRKPIRK.

This sequence belongs to the universal ribosomal protein uS13 family. In terms of assembly, part of the 30S ribosomal subunit. Forms a loose heterodimer with protein S19. Forms two bridges to the 50S subunit in the 70S ribosome.

In terms of biological role, located at the top of the head of the 30S subunit, it contacts several helices of the 16S rRNA. In the 70S ribosome it contacts the 23S rRNA (bridge B1a) and protein L5 of the 50S subunit (bridge B1b), connecting the 2 subunits; these bridges are implicated in subunit movement. Contacts the tRNAs in the A and P-sites. This Shewanella halifaxensis (strain HAW-EB4) protein is Small ribosomal subunit protein uS13.